Here is a 141-residue protein sequence, read N- to C-terminus: Nucleoside diphosphate kinase (141 aa).

ATP contacts are provided by Lys-11, Phe-59, Arg-87, Thr-93, Arg-104, and Asn-114. The Pros-phosphohistidine intermediate role is filled by His-117.

Belongs to the NDK family. As to quaternary structure, homotetramer. Mg(2+) is required as a cofactor.

It is found in the cytoplasm. The catalysed reaction is a 2'-deoxyribonucleoside 5'-diphosphate + ATP = a 2'-deoxyribonucleoside 5'-triphosphate + ADP. It carries out the reaction a ribonucleoside 5'-diphosphate + ATP = a ribonucleoside 5'-triphosphate + ADP. In terms of biological role, major role in the synthesis of nucleoside triphosphates other than ATP. The ATP gamma phosphate is transferred to the NDP beta phosphate via a ping-pong mechanism, using a phosphorylated active-site intermediate. In Cupriavidus necator (strain ATCC 17699 / DSM 428 / KCTC 22496 / NCIMB 10442 / H16 / Stanier 337) (Ralstonia eutropha), this protein is Nucleoside diphosphate kinase.